Reading from the N-terminus, the 361-residue chain is sn-glycerol-3-phosphate import ATP-binding protein UgpC (361 aa).

Positions 4-235 (LSFRNLKKTY…PASTFVAGFI (232 aa)) constitute an ABC transporter domain. 37-44 (GPSGCGKS) serves as a coordination point for ATP.

Belongs to the ABC transporter superfamily. sn-glycerol-3-phosphate importer (TC 3.A.1.1.3) family. The complex is composed of two ATP-binding proteins (UgpC), two transmembrane proteins (UgpA and UgpE) and a solute-binding protein (UgpB).

It localises to the cell inner membrane. The catalysed reaction is sn-glycerol 3-phosphate(out) + ATP + H2O = sn-glycerol 3-phosphate(in) + ADP + phosphate + H(+). Part of the ABC transporter complex UgpBAEC involved in sn-glycerol-3-phosphate (G3P) import. Responsible for energy coupling to the transport system. The protein is sn-glycerol-3-phosphate import ATP-binding protein UgpC of Bordetella avium (strain 197N).